Consider the following 193-residue polypeptide: Cysteine and glycine-rich protein 2 (193 aa).

The region spanning 10–61 is the LIM zinc-binding 1 domain; sequence CGACGRTVYHAEEVQCDGRSFHRCCFLCMVCRKNLDSTTVAIHDEEIYCKSC. The Nuclear localization signal motif lies at 64–69; that stretch reads KKYGPK. Lysine 91 participates in a covalent cross-link: Glycyl lysine isopeptide (Lys-Gly) (interchain with G-Cter in SUMO2). N6-acetyllysine is present on residues lysine 112 and lysine 131. Positions 119 to 170 constitute an LIM zinc-binding 2 domain; the sequence is CSRCGDSVYAAEKIIGAGKPWHKNCFRCAKCGKSLESTTLTEKEGEIYCKGC. At lysine 137 the chain carries N6-acetyllysine; alternate. At lysine 137 the chain carries N6-succinyllysine; alternate. Lysine 161 is subject to N6-acetyllysine.

As to quaternary structure, interacts with KAT14. The LIM domain 1 is necessary and sufficient for this interaction. Interacts with GLRX3.

The protein resides in the nucleus. Drastically down-regulated in response to PDGF-BB or cell injury, that promote smooth muscle cell proliferation and dedifferentiation. Seems to play a role in the development of the embryonic vascular system. In Bos taurus (Bovine), this protein is Cysteine and glycine-rich protein 2 (CSRP2).